A 259-amino-acid polypeptide reads, in one-letter code: Phosphatidylglycerol--prolipoprotein diacylglyceryl transferase (259 aa).

The next 4 helical transmembrane spans lie at 12–32, 41–61, 80–100, and 109–129; these read LAIHWYALCILSGLVLAVYLA, ISSDAIFDFILIAFPLAIVGA, IIAIWNGGIAIYGGLITGALV, and VLNPIHFLDIAAPSVMAAQAI. R131 contributes to the a 1,2-diacyl-sn-glycero-3-phospho-(1'-sn-glycerol) binding site. 3 helical membrane-spanning segments follow: residues 167 to 187, 194 to 214, and 226 to 246; these read IPTFLYESFWNLLGFVIIMMW, LLDGEIFAFYLIWYGSGRLVI, and GIRISQYVSALLIIIGLIFVI.

It belongs to the Lgt family.

The protein resides in the cell membrane. The catalysed reaction is L-cysteinyl-[prolipoprotein] + a 1,2-diacyl-sn-glycero-3-phospho-(1'-sn-glycerol) = an S-1,2-diacyl-sn-glyceryl-L-cysteinyl-[prolipoprotein] + sn-glycerol 1-phosphate + H(+). The protein operates within protein modification; lipoprotein biosynthesis (diacylglyceryl transfer). Functionally, catalyzes the transfer of the diacylglyceryl group from phosphatidylglycerol to the sulfhydryl group of the N-terminal cysteine of a prolipoprotein, the first step in the formation of mature lipoproteins. The chain is Phosphatidylglycerol--prolipoprotein diacylglyceryl transferase from Streptococcus pyogenes serotype M3 (strain ATCC BAA-595 / MGAS315).